The chain runs to 178 residues: Adenine phosphoribosyltransferase (178 aa).

The protein belongs to the purine/pyrimidine phosphoribosyltransferase family. As to quaternary structure, homodimer.

The protein localises to the cytoplasm. It catalyses the reaction AMP + diphosphate = 5-phospho-alpha-D-ribose 1-diphosphate + adenine. The protein operates within purine metabolism; AMP biosynthesis via salvage pathway; AMP from adenine: step 1/1. Functionally, catalyzes a salvage reaction resulting in the formation of AMP, that is energically less costly than de novo synthesis. The polypeptide is Adenine phosphoribosyltransferase (Cereibacter sphaeroides (strain ATCC 17023 / DSM 158 / JCM 6121 / CCUG 31486 / LMG 2827 / NBRC 12203 / NCIMB 8253 / ATH 2.4.1.) (Rhodobacter sphaeroides)).